An 88-amino-acid polypeptide reads, in one-letter code: Small ribosomal subunit protein bS20 (88 aa).

It belongs to the bacterial ribosomal protein bS20 family. As to quaternary structure, part of the 30S ribosomal subunit.

In terms of biological role, binds directly to 16S ribosomal RNA. In Bacillus subtilis (strain 168), this protein is Small ribosomal subunit protein bS20 (rpsT).